A 106-amino-acid polypeptide reads, in one-letter code: N(2)-fixation sustaining protein CowN (106 aa).

This sequence belongs to the CowN family.

Is required to sustain N(2)-dependent growth in the presence of low levels of carbon monoxide (CO). Probably acts by protecting the N(2) fixation ability of the nitrogenase complex, which is inactivated in the presence of CO. The chain is N(2)-fixation sustaining protein CowN from Denitrovibrio acetiphilus (strain DSM 12809 / NBRC 114555 / N2460).